We begin with the raw amino-acid sequence, 558 residues long: Dihydroxy-acid dehydratase (558 aa).

Cysteine 50 is a [2Fe-2S] cluster binding site. Position 82 (aspartate 82) interacts with Mg(2+). Cysteine 123 contacts [2Fe-2S] cluster. 2 residues coordinate Mg(2+): aspartate 124 and lysine 125. N6-carboxylysine is present on lysine 125. Cysteine 195 contributes to the [2Fe-2S] cluster binding site. Glutamate 447 contributes to the Mg(2+) binding site. Catalysis depends on serine 472, which acts as the Proton acceptor.

The protein belongs to the IlvD/Edd family. In terms of assembly, homodimer. [2Fe-2S] cluster is required as a cofactor. It depends on Mg(2+) as a cofactor.

The enzyme catalyses (2R)-2,3-dihydroxy-3-methylbutanoate = 3-methyl-2-oxobutanoate + H2O. The catalysed reaction is (2R,3R)-2,3-dihydroxy-3-methylpentanoate = (S)-3-methyl-2-oxopentanoate + H2O. The protein operates within amino-acid biosynthesis; L-isoleucine biosynthesis; L-isoleucine from 2-oxobutanoate: step 3/4. It participates in amino-acid biosynthesis; L-valine biosynthesis; L-valine from pyruvate: step 3/4. Functionally, functions in the biosynthesis of branched-chain amino acids. Catalyzes the dehydration of (2R,3R)-2,3-dihydroxy-3-methylpentanoate (2,3-dihydroxy-3-methylvalerate) into 2-oxo-3-methylpentanoate (2-oxo-3-methylvalerate) and of (2R)-2,3-dihydroxy-3-methylbutanoate (2,3-dihydroxyisovalerate) into 2-oxo-3-methylbutanoate (2-oxoisovalerate), the penultimate precursor to L-isoleucine and L-valine, respectively. The polypeptide is Dihydroxy-acid dehydratase (Saccharolobus islandicus (strain M.16.27) (Sulfolobus islandicus)).